The following is a 506-amino-acid chain: Radiation-sensitive protein 28 (506 aa).

5 WD repeats span residues 55–94 (PLSI…HRND), 193–233 (HHKY…AVQD), 285–325 (RMQS…RLYS), 357–396 (AHLR…LQPE), and 404–451 (LGTQ…LWNK).

Its subcellular location is the nucleus. Involved in transcription-coupled repair nucleotide excision repair (NER) of UV-induced DNA lesions. This chain is Radiation-sensitive protein 28 (RAD28), found in Saccharomyces cerevisiae (strain ATCC 204508 / S288c) (Baker's yeast).